We begin with the raw amino-acid sequence, 424 residues long: NADH-quinone oxidoreductase subunit H (424 aa).

Helical transmembrane passes span 11-31 (LVVA…LVAI), 79-99 (FVYF…FAFI), 119-139 (LPVA…GIVL), 160-180 (VISY…YAGS), 193-213 (VWYI…MVGE), 255-275 (VSAL…PLNL), 283-303 (WWPV…YFWL), 317-337 (ALGW…AAVI), and 347-367 (YWTP…VMSL). A disordered region spans residues 376–424 (AVTKARRRGKQPAAGPDEQGALEPLFPTPPLPMKPLAQPVGASKENARG).

The protein belongs to the complex I subunit 1 family. In terms of assembly, NDH-1 is composed of 14 different subunits. Subunits NuoA, H, J, K, L, M, N constitute the membrane sector of the complex.

It localises to the cell membrane. It carries out the reaction a quinone + NADH + 5 H(+)(in) = a quinol + NAD(+) + 4 H(+)(out). Functionally, NDH-1 shuttles electrons from NADH, via FMN and iron-sulfur (Fe-S) centers, to quinones in the respiratory chain. The immediate electron acceptor for the enzyme in this species is believed to be menaquinone. Couples the redox reaction to proton translocation (for every two electrons transferred, four hydrogen ions are translocated across the cytoplasmic membrane), and thus conserves the redox energy in a proton gradient. This subunit may bind ubiquinone. The sequence is that of NADH-quinone oxidoreductase subunit H from Mycobacterium ulcerans (strain Agy99).